We begin with the raw amino-acid sequence, 190 residues long: UPF0232 protein SCO3875 (190 aa).

Disordered regions lie at residues 1–70 and 163–190; these read MSAD…GRDP and GPGGPGGPGRRYGPLRAPGSQGPGDTYG. Residues 26–35 show a composition bias toward low complexity; sequence GVDLARVALR. Residues 36 to 45 are compositionally biased toward basic and acidic residues; the sequence is AAREAARARG. Residues 163-172 show a composition bias toward gly residues; it reads GPGGPGGPGR.

This sequence belongs to the UPF0232 family.

The protein is UPF0232 protein SCO3875 of Streptomyces coelicolor (strain ATCC BAA-471 / A3(2) / M145).